Reading from the N-terminus, the 119-residue chain is Movement protein TGB2 (119 aa).

The Cytoplasmic portion of the chain corresponds to 1-13 (MVRNNEIGARPNK). Residues 14–34 (YWPVVAAVVAICLFGFLTVTN) traverse the membrane as a helical segment. Residues 35–79 (QKHATQSGDNIHKFANGGQYRDGSKSIKYNCNNPRAYNGSSSNIT) are Lumenal-facing. The helical transmembrane segment at 80–100 (FSQLFLPVLLIGAALYAYLWF) threads the bilayer. Over 101–119 (TRPDCSVTCRGDCCRSYGG) the chain is Cytoplasmic.

The protein belongs to the virgaviridae/benyvirus TGB2 movement protein family. In terms of assembly, interacts with movement protein TGB3. TGB1-TGB3-TGB2 complex formation is enhanced by ATP hydrolysis.

Its subcellular location is the host cell junction. The protein localises to the host plasmodesma. The protein resides in the host endoplasmic reticulum membrane. It is found in the host cytoplasm. It localises to the host cytoskeleton. Its subcellular location is the host chloroplast envelope. Its function is as follows. Participates in the transport of viral genome to neighboring plant cells directly through plasmodesmata, without any budding. TGBp2 and TGBp3 are necessary for intracellular delivery of TGBp1-containing vRNPs to plasmodesmata. Can gate plasmodesmata and increase their size exclusion limit. To a lesser extent than TGB3, induces host actin cytoskeleton network thickening, which probably plays a major role in virus cell-to-cell movement. Binds ssRNA in a sequence non-specific manner. The protein is Movement protein TGB2 of Potato mop-top virus (isolate Potato/Sweden/Sw) (PMTV).